We begin with the raw amino-acid sequence, 234 residues long: Thiamine-phosphate synthase (234 aa).

4-amino-2-methyl-5-(diphosphooxymethyl)pyrimidine-binding positions include 65-69 (QYRNK) and asparagine 97. The Mg(2+) site is built by aspartate 98 and aspartate 117. Position 136 (serine 136) interacts with 4-amino-2-methyl-5-(diphosphooxymethyl)pyrimidine. 163 to 165 (SHT) serves as a coordination point for 2-[(2R,5Z)-2-carboxy-4-methylthiazol-5(2H)-ylidene]ethyl phosphate. Position 166 (lysine 166) interacts with 4-amino-2-methyl-5-(diphosphooxymethyl)pyrimidine. Residues glycine 192 and 212 to 213 (IS) each bind 2-[(2R,5Z)-2-carboxy-4-methylthiazol-5(2H)-ylidene]ethyl phosphate.

This sequence belongs to the thiamine-phosphate synthase family. Mg(2+) serves as cofactor.

It carries out the reaction 2-[(2R,5Z)-2-carboxy-4-methylthiazol-5(2H)-ylidene]ethyl phosphate + 4-amino-2-methyl-5-(diphosphooxymethyl)pyrimidine + 2 H(+) = thiamine phosphate + CO2 + diphosphate. The enzyme catalyses 2-(2-carboxy-4-methylthiazol-5-yl)ethyl phosphate + 4-amino-2-methyl-5-(diphosphooxymethyl)pyrimidine + 2 H(+) = thiamine phosphate + CO2 + diphosphate. It catalyses the reaction 4-methyl-5-(2-phosphooxyethyl)-thiazole + 4-amino-2-methyl-5-(diphosphooxymethyl)pyrimidine + H(+) = thiamine phosphate + diphosphate. It functions in the pathway cofactor biosynthesis; thiamine diphosphate biosynthesis; thiamine phosphate from 4-amino-2-methyl-5-diphosphomethylpyrimidine and 4-methyl-5-(2-phosphoethyl)-thiazole: step 1/1. Its function is as follows. Condenses 4-methyl-5-(beta-hydroxyethyl)thiazole monophosphate (THZ-P) and 2-methyl-4-amino-5-hydroxymethyl pyrimidine pyrophosphate (HMP-PP) to form thiamine monophosphate (TMP). This Xylella fastidiosa (strain 9a5c) protein is Thiamine-phosphate synthase.